The sequence spans 418 residues: Perilipin-1 homolog (418 aa).

The required for lipid droplet localization stretch occupies residues 211–275; it reads LTIGQRVKNL…EKKTWVIEKS (65 aa).

It belongs to the perilipin family. In terms of tissue distribution, expressed in intestinal and epidermal cells. Expressed in the muscle and hypodermis.

The protein localises to the lipid droplet. In terms of biological role, lipid droplet-associated protein which plays a role in lipid droplet clustering. In Caenorhabditis elegans, this protein is Perilipin-1 homolog.